The primary structure comprises 503 residues: Probable cytosol aminopeptidase (503 aa).

Residues lysine 274 and aspartate 279 each coordinate Mn(2+). The active site involves lysine 286. Positions 297, 356, and 358 each coordinate Mn(2+). Arginine 360 is a catalytic residue.

It belongs to the peptidase M17 family. Requires Mn(2+) as cofactor.

Its subcellular location is the cytoplasm. The enzyme catalyses Release of an N-terminal amino acid, Xaa-|-Yaa-, in which Xaa is preferably Leu, but may be other amino acids including Pro although not Arg or Lys, and Yaa may be Pro. Amino acid amides and methyl esters are also readily hydrolyzed, but rates on arylamides are exceedingly low.. It catalyses the reaction Release of an N-terminal amino acid, preferentially leucine, but not glutamic or aspartic acids.. Functionally, presumably involved in the processing and regular turnover of intracellular proteins. Catalyzes the removal of unsubstituted N-terminal amino acids from various peptides. In Burkholderia ambifaria (strain ATCC BAA-244 / DSM 16087 / CCUG 44356 / LMG 19182 / AMMD) (Burkholderia cepacia (strain AMMD)), this protein is Probable cytosol aminopeptidase.